The following is a 96-amino-acid chain: RNA-binding protein Hfq (96 aa).

The 60-residue stretch at 9–68 (DPYLNALRRERIPVSIYLVNGIKLQGQIESFDQFVILLKNTVNQMVYKHAISTVVPARSV) folds into the Sm domain. A disordered region spans residues 67 to 96 (SVSHHNNSNNSNQQNYQQEQQTDSNVEKAE). Residues 72–87 (NNSNNSNQQNYQQEQQ) show a composition bias toward low complexity.

It belongs to the Hfq family. Homohexamer.

Functionally, RNA chaperone that binds small regulatory RNA (sRNAs) and mRNAs to facilitate mRNA translational regulation in response to envelope stress, environmental stress and changes in metabolite concentrations. Also binds with high specificity to tRNAs. This chain is RNA-binding protein Hfq, found in Pasteurella multocida (strain Pm70).